Here is a 271-residue protein sequence, read N- to C-terminus: 2-dehydro-3-deoxyphosphooctonate aldolase (271 aa).

It belongs to the KdsA family.

The protein localises to the cytoplasm. The catalysed reaction is D-arabinose 5-phosphate + phosphoenolpyruvate + H2O = 3-deoxy-alpha-D-manno-2-octulosonate-8-phosphate + phosphate. It participates in carbohydrate biosynthesis; 3-deoxy-D-manno-octulosonate biosynthesis; 3-deoxy-D-manno-octulosonate from D-ribulose 5-phosphate: step 2/3. Its pathway is bacterial outer membrane biogenesis; lipopolysaccharide biosynthesis. This is 2-dehydro-3-deoxyphosphooctonate aldolase from Campylobacter jejuni subsp. jejuni serotype O:6 (strain 81116 / NCTC 11828).